The following is a 585-amino-acid chain: T-cell surface protein tactile (585 aa).

Positions 1–21 (MEKKWKYCAVYYIIQIHFVKG) are cleaved as a signal peptide. Over 22-519 (VWEKTVNTEE…IVVNKPKDGM (498 aa)) the chain is Extracellular. Residues 38-125 (GSDVNLTCQT…YECMLVLYPE (88 aa)) enclose the Ig-like V-type 1 domain. 13 N-linked (GlcNAc...) asparagine glycosylation sites follow: Asn42, Asn97, Asn107, Asn148, Asn156, Asn166, Asn200, Asn215, Asn277, Asn278, Asn300, Asn350, and Asn368. Cys45 and Cys118 are disulfide-bonded. In terms of domain architecture, Ig-like V-type 2 spans 156 to 238 (NQTLEIPCFQ…YRLHLSPVQI (83 aa)). A disulfide bond links Cys163 and Cys247. The region spanning 269-375 (PEIPVIVENN…VWNISSEKIT (107 aa)) is the Ig-like C2-type domain. A disulfide bond links Cys290 and Cys355. Polar residues-rich tracts occupy residues 385–418 (TDPP…SSVT), 426–452 (RPNT…SSGT), and 460–475 (RIPS…GAGS). The segment at 385-475 (TDPPLSVTES…YSSSPSGAGS (91 aa)) is disordered. A glycan (N-linked (GlcNAc...) asparagine) is linked at Asn435. The N-linked (GlcNAc...) asparagine glycan is linked to Asn497. Residues 520–540 (SWPVIVAALLFCCMILFGLGV) form a helical membrane-spanning segment. Residues 541-585 (RKWCQYQKEIMERPPPFKPPPPPIKYTCIQEPNESDLPYHEMETL) lie on the Cytoplasmic side of the membrane.

In terms of assembly, homodimer; disulfide-linked. Interacts with PVR. Expressed on normal T-cell lines and clones, and some transformed T-cells, but no other cultured cell lines tested. It is expressed at very low levels on activated B-cells.

The protein localises to the membrane. Functionally, may be involved in adhesive interactions of activated T and NK cells during the late phase of the immune response. Promotes NK cell-target adhesion by interacting with PVR present on target cells. May function at a time after T and NK cells have penetrated the endothelium using integrins and selectins, when they are actively engaging diseased cells and moving within areas of inflammation. In Homo sapiens (Human), this protein is T-cell surface protein tactile (CD96).